Consider the following 119-residue polypeptide: Large ribosomal subunit protein bL20 (119 aa).

The protein belongs to the bacterial ribosomal protein bL20 family.

In terms of biological role, binds directly to 23S ribosomal RNA and is necessary for the in vitro assembly process of the 50S ribosomal subunit. It is not involved in the protein synthesizing functions of that subunit. The polypeptide is Large ribosomal subunit protein bL20 (Alkaliphilus metalliredigens (strain QYMF)).